A 148-amino-acid chain; its full sequence is Fluoride-specific ion channel FluC 2 (148 aa).

4 helical membrane passes run 23-43, 61-81, 92-112, and 120-140; these read LGHL…RLAV, GTLA…TLIF, FWVL…LHTL, and LLGG…ALAG. Residues G99 and T102 each contribute to the Na(+) site.

Belongs to the fluoride channel Fluc/FEX (TC 1.A.43) family.

It localises to the cell membrane. It catalyses the reaction fluoride(in) = fluoride(out). Its activity is regulated as follows. Na(+) is not transported, but it plays an essential structural role and its presence is essential for fluoride channel function. Its function is as follows. Fluoride-specific ion channel. Important for reducing fluoride concentration in the cell, thus reducing its toxicity. This is Fluoride-specific ion channel FluC 2 from Rubrobacter xylanophilus (strain DSM 9941 / JCM 11954 / NBRC 16129 / PRD-1).